The sequence spans 565 residues: Proline--tRNA ligase (565 aa).

The protein belongs to the class-II aminoacyl-tRNA synthetase family. ProS type 1 subfamily. As to quaternary structure, homodimer.

The protein resides in the cytoplasm. It catalyses the reaction tRNA(Pro) + L-proline + ATP = L-prolyl-tRNA(Pro) + AMP + diphosphate. Functionally, catalyzes the attachment of proline to tRNA(Pro) in a two-step reaction: proline is first activated by ATP to form Pro-AMP and then transferred to the acceptor end of tRNA(Pro). As ProRS can inadvertently accommodate and process non-cognate amino acids such as alanine and cysteine, to avoid such errors it has two additional distinct editing activities against alanine. One activity is designated as 'pretransfer' editing and involves the tRNA(Pro)-independent hydrolysis of activated Ala-AMP. The other activity is designated 'posttransfer' editing and involves deacylation of mischarged Ala-tRNA(Pro). The misacylated Cys-tRNA(Pro) is not edited by ProRS. In Hydrogenobaculum sp. (strain Y04AAS1), this protein is Proline--tRNA ligase.